The following is a 538-amino-acid chain: Carotenoid 9,10(9',10')-cleavage dioxygenase 1 (538 aa).

Residues His-222, His-270, His-336, and His-523 each coordinate Fe cation.

It belongs to the carotenoid oxygenase family. Homodimer. Fe(2+) is required as a cofactor. High expression in flowers and siliques. Also detected in stems, leaves and roots.

The protein resides in the cytoplasm. The catalysed reaction is all-trans-zeaxanthin + 2 O2 = 4,9-dimethyldodeca-2,4,6,8,10-pentaenedial + 2 (3R)-hydroxy-beta-ionone. Its function is as follows. Cleaves a variety of carotenoids symmetrically at both the 9-10 and 9'-10' double bonds. Active on beta,beta-carotene, lutein, zeaxanthin, all-trans-violaxanthin, 9-cis-violaxanthin and 9'-cis-neoxanthin. With most substrates, the carotenoid is symmetrically cleaved. Probably not involved in abscisic acid biosynthesis. The sequence is that of Carotenoid 9,10(9',10')-cleavage dioxygenase 1 (CCD1) from Arabidopsis thaliana (Mouse-ear cress).